We begin with the raw amino-acid sequence, 83 residues long: UPF0297 protein CLK_1948 (83 aa).

This sequence belongs to the UPF0297 family.

The polypeptide is UPF0297 protein CLK_1948 (Clostridium botulinum (strain Loch Maree / Type A3)).